The following is a 113-amino-acid chain: Ribonuclease P protein component (113 aa).

Belongs to the RnpA family. Consists of a catalytic RNA component (M1 or rnpB) and a protein subunit.

The enzyme catalyses Endonucleolytic cleavage of RNA, removing 5'-extranucleotides from tRNA precursor.. Its function is as follows. RNaseP catalyzes the removal of the 5'-leader sequence from pre-tRNA to produce the mature 5'-terminus. It can also cleave other RNA substrates such as 4.5S RNA. The protein component plays an auxiliary but essential role in vivo by binding to the 5'-leader sequence and broadening the substrate specificity of the ribozyme. In Geotalea uraniireducens (strain Rf4) (Geobacter uraniireducens), this protein is Ribonuclease P protein component.